We begin with the raw amino-acid sequence, 973 residues long: Coatomer subunit beta (973 aa).

HEAT repeat units follow at residues 98-133 (HEMILVCNAIQHDLQHPNEYIRGNTLRFLTKLREAE) and 134-170 (LLEQMVPSVLACLEYRHAYVRKYAILAVFSIFKVSEH). Ser-181 carries the phosphoserine modification. HEAT repeat units lie at residues 279–317 (NVLVPAVNKLIDLAVKVSDNNIKLIVLDRIQDINANNVG) and 318–354 (ALEELTLDILRVLNAEDLDVRSKALDISMDLATSRNA). Ser-540 is subject to Phosphoserine.

In terms of assembly, oligomeric complex that consists of at least the alpha, beta, beta', gamma, delta, epsilon and zeta subunits. The complex interacts with ARF1 and PAB1. The N-terminus is blocked.

The protein localises to the cytoplasm. It localises to the golgi apparatus membrane. Its subcellular location is the cytoplasmic vesicle. The protein resides in the COPI-coated vesicle membrane. Functionally, the coatomer is a cytosolic protein complex that binds to dilysine motifs and reversibly associates with Golgi non-clathrin-coated vesicles, which further mediate biosynthetic protein transport from the ER, via the Golgi up to the trans Golgi network. Coatomer complex is required for budding from Golgi membranes, and is essential for the retrograde Golgi-to-ER transport of dilysine-tagged proteins. Required for mitochondrial morphology. This Saccharomyces cerevisiae (strain ATCC 204508 / S288c) (Baker's yeast) protein is Coatomer subunit beta (SEC26).